The chain runs to 84 residues: Polcalcin Ole e 3 (84 aa).

EF-hand domains lie at 6–40 (QEVAEHERIFKRFDANGDGKISSSELGETLKTLGS) and 41–76 (VTPEEIQRMMAEIDTDGDGFISFEEFTVFARANRGL). Ca(2+) contacts are provided by Asp-19, Asn-21, Asp-23, Lys-25, Glu-30, Asp-54, Asp-56, Asp-58, and Glu-65.

Expressed exclusively in mature pollen.

It is found in the endomembrane system. This is Polcalcin Ole e 3 (OLE3) from Olea europaea (Common olive).